Consider the following 88-residue polypeptide: Small ribosomal subunit protein uS17 (88 aa).

It belongs to the universal ribosomal protein uS17 family. Part of the 30S ribosomal subunit.

Functionally, one of the primary rRNA binding proteins, it binds specifically to the 5'-end of 16S ribosomal RNA. This chain is Small ribosomal subunit protein uS17, found in Mycoplasmopsis pulmonis (strain UAB CTIP) (Mycoplasma pulmonis).